The chain runs to 342 residues: MKVEDFDFDLPEELIAQTPLLDRTSSRLMVLDKESGDIKDQHFTDIISYLNEGDALVLNDTRVLPARLHGIKDETGAHIEVLLLKQKEGNAWETLVKPAKRIRKGATITFGDGALKATCLEELEHGGRILEFSYEGIFYEVLEQLGEMPLPPYIKEQLADQDRYQTVYAKENGSAAAPTAGLHFTEDLLAKISAKGVEIIFVTLHVGLGTFRPVDVEDTANHKMHSEFYRLTEESAERINKIKVQGGKVVAVGTTSIRTLETIASRHDGKLVAESGWTEIFISPGYTFQAVDALITNFHLPKSTLIMLVSALSDRTKILAAYNHAVEQQYRFFSFGDAMFIH.

This sequence belongs to the QueA family. Monomer.

The protein localises to the cytoplasm. It catalyses the reaction 7-aminomethyl-7-carbaguanosine(34) in tRNA + S-adenosyl-L-methionine = epoxyqueuosine(34) in tRNA + adenine + L-methionine + 2 H(+). It functions in the pathway tRNA modification; tRNA-queuosine biosynthesis. Functionally, transfers and isomerizes the ribose moiety from AdoMet to the 7-aminomethyl group of 7-deazaguanine (preQ1-tRNA) to give epoxyqueuosine (oQ-tRNA). The polypeptide is S-adenosylmethionine:tRNA ribosyltransferase-isomerase (Listeria monocytogenes serotype 4a (strain HCC23)).